A 132-amino-acid polypeptide reads, in one-letter code: Small ribosomal subunit protein uS8 (132 aa).

It belongs to the universal ribosomal protein uS8 family. Part of the 30S ribosomal subunit. Contacts proteins S5 and S12.

Functionally, one of the primary rRNA binding proteins, it binds directly to 16S rRNA central domain where it helps coordinate assembly of the platform of the 30S subunit. This Mycobacterium leprae (strain Br4923) protein is Small ribosomal subunit protein uS8.